The following is a 96-amino-acid chain: Large ribosomal subunit protein bL21 (96 aa).

Belongs to the bacterial ribosomal protein bL21 family. In terms of assembly, part of the 50S ribosomal subunit. Contacts protein L20.

In terms of biological role, this protein binds to 23S rRNA in the presence of protein L20. The protein is Large ribosomal subunit protein bL21 of Hydrogenobaculum sp. (strain Y04AAS1).